Reading from the N-terminus, the 663-residue chain is Oxytetracycline resistance protein (663 aa).

One can recognise a tr-type G domain in the interval 1-252; sequence MNKLNLGILA…GIRELLPSVH (252 aa). Residues 10-17, 74-78, and 128-131 contribute to the GTP site; these read AHVDAGKT, DTPGH, and NKID.

The protein belongs to the TRAFAC class translation factor GTPase superfamily. Classic translation factor GTPase family. TetM/TetO subfamily.

Abolishes the inhibitory effect of oxytetracycline on protein synthesis by a non-covalent modification of the ribosomes. The sequence is that of Oxytetracycline resistance protein (otrA) from Streptomyces rimosus.